The chain runs to 426 residues: MAIEEKSTSAEPGPYDALSRFSSLTGEDDRKWWEHTGPVLEKVMRDSGYELQSQYIYLYFVQQHLIPYLGKFPTRGQDDHRWQSNLTPYKVPYELSWNVSHKVVRISWDPVCDASGTENDAFNKKAIHDCTRQLAELDSTVILDRYRLLHKDLVITDEEEQQLLRRDVLPKSGRGQHNLAVDFQEGGITLKVYFYPYMKFLATGTPIEELFFSAIEKLRIADIDEAVGMLKCFLSPKSDDGKPSVDEKVFPSLLACDLCDPSKSRIKYYVIDKWVKWERIANLWTIGGRRLEDPYCAKGLALLKELWDLLAIPEGDRGDIWPNLVLGQPPTHLMTTIANYTLSPASRFPEPQVYLTTFGLNDMAIIDALTAFYERVGFTDMAKSYKKNVQSYYPNLDLNQTNWVHEAVSFSYRNSKPYLSVYYSPF.

Residue Glu-94 coordinates substrate. Dimethylallyl diphosphate-binding residues include Arg-105, Lys-191, and Tyr-193. Tyr-195 is a binding site for substrate. Positions 267, 269, 352, 354, 418, and 422 each coordinate dimethylallyl diphosphate.

It belongs to the tryptophan dimethylallyltransferase family.

It carries out the reaction 6-hydroxydeoxybrevianamide E + dimethylallyl diphosphate = notoamide S + diphosphate. The protein operates within alkaloid biosynthesis. Its activity is regulated as follows. Addition of 5 mM Mg(2+), Ca(2+) or Mn(2+) slightly enhances catalysis (about 100-120%). Significant reduction of enzyme activity (2%-35%) is observed with Cu(2+), Zn(2+), Fe(2+), or Sn(2+) (5 mM). Prenyltransferase; part of the gene cluster that mediates the biosynthesis of notoamide, a fungal indole alkaloid that belongs to a family of natural products containing a characteristic bicyclo[2.2.2]diazaoctane core. The first step of notoamide biosynthesis involves coupling of L-proline and L-tryptophan by the bimodular NRPS notE, to produce cyclo-L-tryptophan-L-proline called brevianamide F. The reverse prenyltransferase notF then acts as a deoxybrevianamide E synthase and converts brevianamide F to deoxybrevianamide E via reverse prenylation at C-2 of the indole ring leading to the bicyclo[2.2.2]diazaoctane core. Deoxybrevianamide E is further hydroxylated at C-6 of the indole ring, likely catalyzed by the cytochrome P450 monooxygenase notG, to yield 6-hydroxy-deoxybrevianamide E. 6-hydroxy-deoxybrevianamide E is a specific substrate of the prenyltransferase notC for normal prenylation at C-7 to produce 6-hydroxy-7-prenyl-deoxybrevianamide, also called notoamide S. As the proposed pivotal branching point in notoamide biosynthesis, notoamide S can be diverted to notoamide E through an oxidative pyran ring closure putatively catalyzed by either notH cytochrome P450 monooxygenase or the notD FAD-linked oxidoreductase. This step would be followed by an indole 2,3-epoxidation-initiated pinacol-like rearrangement catalyzed by the notB FAD-dependent monooxygenase leading to the formation of notoamide C and notoamide D. On the other hand notoamide S is converted to notoamide T by notH (or notD), a bifunctional oxidase that also functions as the intramolecular Diels-Alderase responsible for generation of (+)-notoamide T. To generate antipodal (-)-notoaminide T, notH' (or notD') in Aspergillus versicolor is expected to catalyze a Diels-Alder reaction leading to the opposite stereochemistry. The remaining oxidoreductase notD (or notH) likely catalyzes the oxidative pyran ring formation to yield (+)-stephacidin A. The FAD-dependent monooxygenase notI is highly similar to notB and is predicted to catalyze a similar conversion from (+)-stephacidin A to (-)-notoamide B via the 2,3-epoxidation of (+)-stephacidin A followed by a pinacol-type rearrangement. Finally, it remains unclear which enzyme could be responsible for the final hydroxylation steps leading to notoamide A and sclerotiamide. In Aspergillus sp. (strain MF297-2), this protein is 6-Hydroxy-7-prenyldeoxybrevianamide E synthase notC.